The following is a 612-amino-acid chain: UvrABC system protein C (612 aa).

A GIY-YIG domain is found at 20 to 98 (THSGVYRMLD…IKQHRPKYNI (79 aa)). A UVR domain is found at 208 to 243 (SSVLEEISAKMYQASEDMEYEKAQVYRDQLVVLRKL).

It belongs to the UvrC family. Interacts with UvrB in an incision complex.

It is found in the cytoplasm. In terms of biological role, the UvrABC repair system catalyzes the recognition and processing of DNA lesions. UvrC both incises the 5' and 3' sides of the lesion. The N-terminal half is responsible for the 3' incision and the C-terminal half is responsible for the 5' incision. The polypeptide is UvrABC system protein C (Francisella tularensis subsp. mediasiatica (strain FSC147)).